A 230-amino-acid polypeptide reads, in one-letter code: Heptaprenylglyceryl phosphate synthase (230 aa).

Position 12 (K12) interacts with sn-glycerol 1-phosphate. Residues D14 and S40 each contribute to the Mg(2+) site. Sn-glycerol 1-phosphate contacts are provided by residues Y159 to G164, G189, and G209 to N210.

The protein belongs to the GGGP/HepGP synthase family. Group I subfamily. In terms of assembly, homodimer. Requires Mg(2+) as cofactor.

It carries out the reaction sn-glycerol 1-phosphate + all-trans-heptaprenyl diphosphate = 3-heptaprenyl-sn-glycero-1-phosphate + diphosphate. Its pathway is membrane lipid metabolism; glycerophospholipid metabolism. Its function is as follows. Prenyltransferase that catalyzes in vivo the transfer of the heptaprenyl moiety of heptaprenyl pyrophosphate (HepPP; 35 carbon atoms) to the C3 hydroxyl of sn-glycerol-1-phosphate (G1P), producing heptaprenylglyceryl phosphate (HepGP). This reaction is an ether-bond-formation step in the biosynthesis of archaea-type G1P-based membrane lipids found in Bacillales. In Bacillus pumilus (strain SAFR-032), this protein is Heptaprenylglyceryl phosphate synthase.